The sequence spans 345 residues: Homeobox-leucine zipper protein HOX16 (345 aa).

A DNA-binding region (homeobox) is located at residues 76–135; it reads LPEKKRRLTPEQVHLLERSFEEENKLEPERKTELARKLGLQPRQVAVWFQNRRARWKTKQ. Residues 134–178 are leucine-zipper; that stretch reads KQLERDFDRLKASFDALRADHDALLQDNHRLHSQVMSLTEKLQEK. Positions 220–241 are disordered; the sequence is FEEQQEQQVKAEDRLSTGSGGS.

It belongs to the HD-ZIP homeobox family. Class I subfamily. In terms of tissue distribution, expressed in seedlings, stems, leaf sheaths and blades and panicles.

It is found in the nucleus. Its function is as follows. Probable transcription factor. The polypeptide is Homeobox-leucine zipper protein HOX16 (HOX16) (Oryza sativa subsp. indica (Rice)).